We begin with the raw amino-acid sequence, 177 residues long: Large ribosomal subunit protein uL6 (177 aa).

Belongs to the universal ribosomal protein uL6 family. Part of the 50S ribosomal subunit.

In terms of biological role, this protein binds to the 23S rRNA, and is important in its secondary structure. It is located near the subunit interface in the base of the L7/L12 stalk, and near the tRNA binding site of the peptidyltransferase center. The chain is Large ribosomal subunit protein uL6 from Rhizobium etli (strain ATCC 51251 / DSM 11541 / JCM 21823 / NBRC 15573 / CFN 42).